A 100-amino-acid polypeptide reads, in one-letter code: Urease subunit gamma (100 aa).

The protein belongs to the urease gamma subunit family. As to quaternary structure, heterotrimer of UreA (gamma), UreB (beta) and UreC (alpha) subunits. Three heterotrimers associate to form the active enzyme.

It localises to the cytoplasm. The enzyme catalyses urea + 2 H2O + H(+) = hydrogencarbonate + 2 NH4(+). Its pathway is nitrogen metabolism; urea degradation; CO(2) and NH(3) from urea (urease route): step 1/1. The protein is Urease subunit gamma of Limosilactobacillus fermentum (Lactobacillus fermentum).